We begin with the raw amino-acid sequence, 338 residues long: Ornithine carbamoyltransferase, catabolic (338 aa).

Residues 58–61, Gln-85, Arg-109, and 136–139 contribute to the carbamoyl phosphate site; these read STRT and HPTQ. L-ornithine contacts are provided by residues Asn-168, Asp-232, and 236–237; that span reads SM. Residues 273–274 and Arg-318 contribute to the carbamoyl phosphate site; that span reads CL.

Belongs to the aspartate/ornithine carbamoyltransferase superfamily. OTCase family.

It is found in the cytoplasm. The catalysed reaction is carbamoyl phosphate + L-ornithine = L-citrulline + phosphate + H(+). The protein operates within amino-acid degradation; L-arginine degradation via ADI pathway; carbamoyl phosphate from L-arginine: step 2/2. In terms of biological role, reversibly catalyzes the transfer of the carbamoyl group from carbamoyl phosphate (CP) to the N(epsilon) atom of ornithine (ORN) to produce L-citrulline. The polypeptide is Ornithine carbamoyltransferase, catabolic (Streptococcus pneumoniae serotype 4 (strain ATCC BAA-334 / TIGR4)).